The chain runs to 520 residues: Sodium-dependent dicarboxylate transporter SdcS (520 aa).

14 helical membrane-spanning segments follow: residues 30 to 50 (AGQL…LLFF), 55 to 75 (LPWK…WWIT), 77 to 97 (AIPI…GHIL), 104 to 124 (SEYG…AIAM), 160 to 180 (SMFV…LAII), 207 to 227 (IGYA…PLII), 242 to 262 (FAKW…ITWL), 298 to 318 (KVVQ…EFLL), 323 to 343 (VTSS…LFII), 362 to 382 (ELPW…KGIS), 399 to 419 (GVSP…LTEV), 428 to 448 (MILP…LLLM), 452 to 472 (AMAA…AIIF), and 491 to 511 (LISA…VLGI).

It belongs to the SLC13A/DASS transporter (TC 2.A.47) family. NADC subfamily.

The protein resides in the cell membrane. Mediates the transport of the dicarboxylates fumarate, malate, and succinate across the cytoplasmic membrane via a Na(+)-electrochemical gradient. This chain is Sodium-dependent dicarboxylate transporter SdcS (sdcS), found in Staphylococcus aureus (strain USA300).